The following is a 354-amino-acid chain: UDP-N-acetylglucosamine--N-acetylmuramyl-(pentapeptide) pyrophosphoryl-undecaprenol N-acetylglucosamine transferase (354 aa).

UDP-N-acetyl-alpha-D-glucosamine-binding positions include 11–13, arginine 164, serine 194, and glutamine 289; that span reads SAG.

The protein belongs to the glycosyltransferase 28 family. MurG subfamily.

The protein localises to the cell membrane. It catalyses the reaction di-trans,octa-cis-undecaprenyl diphospho-N-acetyl-alpha-D-muramoyl-L-alanyl-D-glutamyl-meso-2,6-diaminopimeloyl-D-alanyl-D-alanine + UDP-N-acetyl-alpha-D-glucosamine = di-trans,octa-cis-undecaprenyl diphospho-[N-acetyl-alpha-D-glucosaminyl-(1-&gt;4)]-N-acetyl-alpha-D-muramoyl-L-alanyl-D-glutamyl-meso-2,6-diaminopimeloyl-D-alanyl-D-alanine + UDP + H(+). The protein operates within cell wall biogenesis; peptidoglycan biosynthesis. Its function is as follows. Cell wall formation. Catalyzes the transfer of a GlcNAc subunit on undecaprenyl-pyrophosphoryl-MurNAc-pentapeptide (lipid intermediate I) to form undecaprenyl-pyrophosphoryl-MurNAc-(pentapeptide)GlcNAc (lipid intermediate II). The chain is UDP-N-acetylglucosamine--N-acetylmuramyl-(pentapeptide) pyrophosphoryl-undecaprenol N-acetylglucosamine transferase from Shouchella clausii (strain KSM-K16) (Alkalihalobacillus clausii).